The following is a 342-amino-acid chain: Alpha-tocopherol transfer protein-like (342 aa).

A disordered region spans residues 1-31 (MSEESDSLRTSPSVASLSENELPPPPEPPGY). The span at 8-19 (LRTSPSVASLSE) shows a compositional bias: polar residues. The CRAL-TRIO domain maps to 117–282 (KPSALKDVLA…EYGGTAGELD (166 aa)).

May act as a protein that binds a hydrophobic ligand. The chain is Alpha-tocopherol transfer protein-like (TTPAL) from Pongo abelii (Sumatran orangutan).